We begin with the raw amino-acid sequence, 39 residues long: Contryphan-Cal1 (39 aa).

A signal peptide spans 1–20; sequence MTRTAVLLLTLLFLVAMAAS. An intrachain disulfide couples Cys-29 to Cys-35.

In terms of tissue distribution, expressed by the venom duct.

The protein localises to the secreted. Probable neurotoxin. This Californiconus californicus (California cone) protein is Contryphan-Cal1.